The primary structure comprises 311 residues: Olfactory receptor 2M4 (311 aa).

Residues 1–25 (MVWENQTFNSIFILLGIFNHSPTHT) are Extracellular-facing. N-linked (GlcNAc...) asparagine glycosylation occurs at Asn5. A helical transmembrane segment spans residues 26 to 49 (FLFSLVLGIFSLALMENISMVLLI). Residues 50–57 (YIEKQLHT) are Cytoplasmic-facing. A helical membrane pass occupies residues 58-79 (PMYFLLSQLSLMDLMLICTTLP). The Extracellular portion of the chain corresponds to 80-100 (KMIFSYLSGKKSISLAGCGTQ). Cys97 and Cys189 are oxidised to a cystine. A helical membrane pass occupies residues 101 to 120 (IFFYVSLLGAECFLLAVMAY). Topologically, residues 121-139 (DRYVAICHPLQYTILMNPK) are cytoplasmic. The chain crosses the membrane as a helical span at residues 140–158 (LCVFMTVASWTLGSLDGII). Residues 159 to 195 (VLAAVLSFSYCSSLEIHHFFCDVAALLPLSCTETSAF) lie on the Extracellular side of the membrane. A helical membrane pass occupies residues 196–219 (ERLLVICCVVMLIFPVSVIILSYS). Residues 220 to 236 (HVLRAVIHMGSGESRRK) are Cytoplasmic-facing. The chain crosses the membrane as a helical span at residues 237–259 (AFTTCSSHLSVVGLYYGAAMFMY). Residues 260 to 272 (MRPASKHTPDQDK) are Extracellular-facing. The chain crosses the membrane as a helical span at residues 273–292 (MVSAFYTILTPMLNPLIYSL). Over 293-311 (RNKEVFRALQKVLKKRKLI) the chain is Cytoplasmic.

It belongs to the G-protein coupled receptor 1 family.

It is found in the cell membrane. Functionally, odorant receptor. This chain is Olfactory receptor 2M4 (OR2M4), found in Homo sapiens (Human).